Here is a 367-residue protein sequence, read N- to C-terminus: Anthranilate phosphoribosyltransferase (367 aa).

5-phospho-alpha-D-ribose 1-diphosphate is bound by residues Gly-105, 108 to 109, Thr-113, 115 to 118, 133 to 141, and Gly-145; these read GD, NIST, and KHGNRAASS. An anthranilate-binding site is contributed by Gly-105. Residue Ser-117 coordinates Mg(2+). Residue Asn-136 participates in anthranilate binding. Arg-191 lines the anthranilate pocket. Mg(2+)-binding residues include Asp-249 and Glu-250.

This sequence belongs to the anthranilate phosphoribosyltransferase family. As to quaternary structure, homodimer. Mg(2+) serves as cofactor.

It catalyses the reaction N-(5-phospho-beta-D-ribosyl)anthranilate + diphosphate = 5-phospho-alpha-D-ribose 1-diphosphate + anthranilate. The protein operates within amino-acid biosynthesis; L-tryptophan biosynthesis; L-tryptophan from chorismate: step 2/5. In terms of biological role, catalyzes the transfer of the phosphoribosyl group of 5-phosphorylribose-1-pyrophosphate (PRPP) to anthranilate to yield N-(5'-phosphoribosyl)-anthranilate (PRA). This is Anthranilate phosphoribosyltransferase from Corynebacterium jeikeium (strain K411).